The primary structure comprises 146 residues: Large ribosomal subunit protein uL11 (146 aa).

This sequence belongs to the universal ribosomal protein uL11 family. Part of the ribosomal stalk of the 50S ribosomal subunit. Interacts with L10 and the large rRNA to form the base of the stalk. L10 forms an elongated spine to which L12 dimers bind in a sequential fashion forming a multimeric L10(L12)X complex. In terms of processing, one or more lysine residues are methylated.

Its function is as follows. Forms part of the ribosomal stalk which helps the ribosome interact with GTP-bound translation factors. The sequence is that of Large ribosomal subunit protein uL11 from Corynebacterium jeikeium (strain K411).